The sequence spans 504 residues: Anthocyanidin 3-O-glucoside 5-O-glucosyltransferase (504 aa).

The Proton acceptor role is filled by His-23. His-23 contributes to the an anthocyanidin binding site. The interval 107–126 (TKKGQGQGQGQGQGQGQGQG) is disordered. Positions 111–125 (QGQGQGQGQGQGQGQ) are enriched in gly residues. 9 residues coordinate UDP-alpha-D-glucose: Thr-157, Gln-377, His-392, Trp-395, Asn-396, Ser-397, Glu-400, Asp-416, and Gln-417.

Belongs to the UDP-glycosyltransferase family. Predominantly expressed in petals and weakly in filaments. Not expressed in leaves, stems and other floral organs.

The catalysed reaction is an anthocyanidin 3-O-beta-D-glucoside + UDP-alpha-D-glucose = an anthocyanidin 3,5-di-O-beta-D-glucoside + UDP + 2 H(+). The protein operates within pigment biosynthesis; anthocyanin biosynthesis. Its function is as follows. Catalyzes the glucosylation at the O-5 position of anthocyanidin 3-glucosides to form anthocyanidin 3,5-di-O-glucosides using UDP-glucose as sugar donor. Anthocyanidin 3,5-di-O-glucosides are molecules that are responsible for pigmentation. Involved in biosynsthesis of accumulate gentiodelphin, a unique polyacylated delphinidin-type anthocyanin, in the petals. Also acts on anthocyanidin 3-O-(6-O-malonylglucoside). Much less active with hydroxycinnamoylglucose derivatives. No activity in the absence of the 3-O-glucoside group. This Gentiana triflora (Clustered gentian) protein is Anthocyanidin 3-O-glucoside 5-O-glucosyltransferase (5GT7).